A 719-amino-acid chain; its full sequence is MSDISVEKLTELEAAAELERLARAIAHHDELYHAKDRPEISDAAYDALKRRNEAIEAHFPALVRDDSPSRRVGAAPALATFAPVVHARPMLSLDNAFSDEDVRDFVGSVYRFLGQLPDDSIAFTAEPKIDGLSMSIRYENGILVSGATRGDGTTGENVTANIRTIAEIPNRLPAGAPAVVEVRGEVYMAKSDFLTLNAQMEAEGKQTYVNPRNTAAGSLRQLDAKVTASRKLRFFAYAWGEMSDMPADTQLGMVEVFRQWGFPVNPLMKRFNSVDGLLAHYRAIGMERPTLDYDIDGVVYKVDRLDLQTRLGFRSRSPRWAIAHKFPAEQALTILRGIDIQVGRTGALTPVARLEPITVGGVVVTNATLHNEDYIKGIGQKGEPIREGRDIRIGDSVIVQRAGDVIPQIVDVVLEEGKKRGEPYQFPHVCPACGSHAVREEGEAVRRCTGGLICPAQAVERIRHFVSRNAFDIEGLGEKQVEFFFNAEDPALCIRSPADIFTLKKRQENSLTKLQNIEGFGATSVKKLYDAIDARREIALHRFLFGLGIRHVGEVNAKRLARAYLSYAAFEKAALEAVPPKEGDRTDKGSEAWQDMLAVEGIGSIVAEAVVDFYGEPHNREVLAALLAEVTPLDEEARVATGSPVEGKTVVFTGSLERMSRDEAKAMAERHGAKTAGSVSKKTDLVVAGPGAGSKLAKATELGIEVINEDDWFKLVGED.

NAD(+) is bound by residues 42 to 46 (DAAYD), 92 to 93 (SL), and Glu126. The N6-AMP-lysine intermediate role is filled by Lys128. NAD(+) contacts are provided by Arg149, Glu185, Lys301, and Lys325. Cys430, Cys433, Cys448, and Cys454 together coordinate Zn(2+). Residues 640–719 (ATGSPVEGKT…DDWFKLVGED (80 aa)) form the BRCT domain.

The protein belongs to the NAD-dependent DNA ligase family. LigA subfamily. The cofactor is Mg(2+). Mn(2+) serves as cofactor.

The catalysed reaction is NAD(+) + (deoxyribonucleotide)n-3'-hydroxyl + 5'-phospho-(deoxyribonucleotide)m = (deoxyribonucleotide)n+m + AMP + beta-nicotinamide D-nucleotide.. Functionally, DNA ligase that catalyzes the formation of phosphodiester linkages between 5'-phosphoryl and 3'-hydroxyl groups in double-stranded DNA using NAD as a coenzyme and as the energy source for the reaction. It is essential for DNA replication and repair of damaged DNA. This chain is DNA ligase, found in Brucella suis biovar 1 (strain 1330).